A 185-amino-acid polypeptide reads, in one-letter code: NAD(P)H-dependent FMN reductase PA1204 (185 aa).

FMN is bound by residues 13–20 (SLRSGSYN) and 81–83 (YNY). Residue 115–122 (SAGRFGTA) participates in NAD(+) binding.

This sequence belongs to the SsuE family. Homodimer. FMN serves as cofactor.

Has NAD(P)H-dependent FMN reductase activity. The protein is NAD(P)H-dependent FMN reductase PA1204 of Pseudomonas aeruginosa (strain ATCC 15692 / DSM 22644 / CIP 104116 / JCM 14847 / LMG 12228 / 1C / PRS 101 / PAO1).